Reading from the N-terminus, the 138-residue chain is Hydrogenase maturation factor HypA (138 aa).

H2 is a binding site for Ni(2+). Residues C73, C76, C110, and C113 each coordinate Zn(2+).

The protein belongs to the HypA/HybF family.

Involved in the maturation of [NiFe] hydrogenases. Required for nickel insertion into the metal center of the hydrogenase. The chain is Hydrogenase maturation factor HypA from Thermococcus sibiricus (strain DSM 12597 / MM 739).